The chain runs to 363 residues: Cleavage and termination factor 1 (363 aa).

Positions 7 to 85 (NVVFVGNIPY…RKIRVEFPSN (79 aa)) constitute an RRM domain. The interval 291-325 (QPASATSSPPSVPQKIPSSNHKSQQANGSDQGNEG) is disordered. Residues 306 to 322 (IPSSNHKSQQANGSDQG) are compositionally biased toward polar residues.

As to quaternary structure, interacts with res2.

It localises to the nucleus. Its function is as follows. Component of the cleavage factor I (CF I) involved in pre-mRNA 3'-end processing. The protein is Cleavage and termination factor 1 (ctf1) of Schizosaccharomyces pombe (strain 972 / ATCC 24843) (Fission yeast).